The primary structure comprises 133 residues: Small ribosomal subunit protein uS8 (133 aa).

It belongs to the universal ribosomal protein uS8 family. As to quaternary structure, part of the 30S ribosomal subunit. Contacts proteins S5 and S12.

Its function is as follows. One of the primary rRNA binding proteins, it binds directly to 16S rRNA central domain where it helps coordinate assembly of the platform of the 30S subunit. The sequence is that of Small ribosomal subunit protein uS8 from Chloroflexus aggregans (strain MD-66 / DSM 9485).